Consider the following 212-residue polypeptide: Probable GTP-binding protein EngB (212 aa).

Residues 38-210 (SLPEIAFVGK…KASLAKCIKP (173 aa)) form the EngB-type G domain. GTP-binding positions include 46 to 53 (GKSNVGKS), 73 to 77 (GRTRQ), 91 to 94 (DLPG), 158 to 161 (TKSD), and 189 to 191 (VSN). Residues S53 and T75 each contribute to the Mg(2+) site.

It belongs to the TRAFAC class TrmE-Era-EngA-EngB-Septin-like GTPase superfamily. EngB GTPase family. Requires Mg(2+) as cofactor.

Its function is as follows. Necessary for normal cell division and for the maintenance of normal septation. The polypeptide is Probable GTP-binding protein EngB (Rickettsia peacockii (strain Rustic)).